A 331-amino-acid polypeptide reads, in one-letter code: Geranylgeranyl pyrophosphate synthase dpmaD (331 aa).

The isopentenyl diphosphate site is built by Lys-53, Arg-56, and His-85. Mg(2+)-binding residues include Asp-92 and Asp-96. Arg-101 is a binding site for dimethylallyl diphosphate. Residue Arg-102 coordinates isopentenyl diphosphate. The dimethylallyl diphosphate site is built by Lys-179, Thr-180, and Gln-213. Asp-216 provides a ligand contact to Mg(2+). Dimethylallyl diphosphate contacts are provided by Asn-220, Lys-230, and Lys-240.

Belongs to the FPP/GGPP synthase family. The cofactor is Mg(2+).

The enzyme catalyses isopentenyl diphosphate + dimethylallyl diphosphate = (2E)-geranyl diphosphate + diphosphate. It carries out the reaction isopentenyl diphosphate + (2E)-geranyl diphosphate = (2E,6E)-farnesyl diphosphate + diphosphate. It catalyses the reaction isopentenyl diphosphate + (2E,6E)-farnesyl diphosphate = (2E,6E,10E)-geranylgeranyl diphosphate + diphosphate. The protein operates within secondary metabolite biosynthesis; terpenoid biosynthesis. Geranylgeranyl pyrophosphate synthase; part of the gene cluster that mediates the biosynthesis of the diterpenoid pyrones subglutinols A and B. The first step of the pathway is the synthesis of the alpha-pyrone moiety by the polyketide synthase dpmaA via condensation of one acetyl-CoA starter unit with 3 malonyl-CoA units and 2 methylations. The alpha-pyrone is then combined with geranylgeranyl pyrophosphate (GGPP) formed by the GGPP synthase dpmaD through the action of the prenyltransferase dpmaC to yield a linear alpha-pyrone diterpenoid. Subsequent steps in the diterpenoid pyrone biosynthetic pathway involve the decalin core formation, which is initiated by the epoxidation of the C10-C11 olefin by the FAD-dependent oxidoreductase dpmaE, and is followed by a cyclization cascade catalyzed by the terpene cyclase dpmaB. The dehydrogenase dpmaF is then involved in tetrahydrofuran (THF) ring formation at the C5 unit to complete the formation of subglutinols A and B. The chain is Geranylgeranyl pyrophosphate synthase dpmaD from Metarhizium anisopliae (Entomophthora anisopliae).